An 855-amino-acid polypeptide reads, in one-letter code: Envelope glycoprotein gp160 (855 aa).

An N-terminal signal peptide occupies residues 1–31 (MKVKGTRRNYQHLWRWGTLLLGMLMICSATE). The Extracellular portion of the chain corresponds to 32-683 (KLWVTVYYGV…ITNWLWYIKI (652 aa)). Residues Cys-53 and Cys-73 are joined by a disulfide bond. N-linked (GlcNAc...) asparagine; by host glycosylation is found at Asn-87, Asn-129, Asn-140, Asn-154, Asn-158, Asn-184, Asn-190, Asn-200, Asn-233, Asn-244, Asn-265, Asn-279, Asn-292, Asn-298, Asn-304, Asn-334, Asn-341, Asn-358, and Asn-364. 5 cysteine pairs are disulfide-bonded: Cys-118–Cys-208, Cys-125–Cys-199, Cys-130–Cys-155, Cys-221–Cys-250, and Cys-231–Cys-242. Positions 130-154 (CTDLGKATNTNSSNWKEEIKGEIKN) are V1. The V2 stretch occupies residues 155–199 (CSFNITTSIRDKIQKENALFRNLDVVPIDNASTTTNYTNYRLIHC). A V3 region spans residues 299 to 332 (CTRPNNNTRKSIYIGPGRAFHTTGRIIGDIRKAH). Residues Cys-299 and Cys-333 are joined by a disulfide bond. The interval 366–376 (SSGGDPEIVMH) is CD4-binding loop. Intrachain disulfides connect Cys-380–Cys-442 and Cys-387–Cys-415. Residues 387–415 (CNTTQLFNNTWRLNHTEGTKGNDTIILPC) are V4. N-linked (GlcNAc...) asparagine; by host glycans are attached at residues Asn-388, Asn-394, Asn-400, Asn-408, Asn-445, Asn-458, and Asn-461. V5 stretches follow at residues 458-469 (NVTNDTEVFRPG) and 460-469 (TNDTEVFRPG). The segment at 510-531 (AVGIVGAMFLGFLGAAGSTMGA) is fusion peptide. Residues 573-591 (KQLQARVLAVERYLRDQQL) form an immunosuppression region. The cysteines at positions 597 and 603 are disulfide-linked. 4 N-linked (GlcNAc...) asparagine; by host glycosylation sites follow: Asn-610, Asn-615, Asn-624, and Asn-636. Residues 632 to 666 (REIDNYTNTIYTLLEESQNQQEKNEQELLELDKWA) adopt a coiled-coil conformation. An MPER; binding to GalCer region spans residues 661–682 (ELDKWASLWNWFSITNWLWYIK). Residues 684–704 (FIMIVGGLVGLRIVFAVLSIV) form a helical membrane-spanning segment. Residues 705-855 (NRVRQGYSPL…IRQGLERLLL (151 aa)) lie on the Cytoplasmic side of the membrane. The YXXL motif; contains endocytosis signal signature appears at 711–714 (YSPL). Residues 720 to 739 (LPVPRGPDRPDGIEEEGGER) form a disordered region. Residue Cys-763 is the site of S-palmitoyl cysteine; by host attachment. Residues 854-855 (LL) carry the Di-leucine internalization motif motif.

It belongs to the HIV-1 env protein family. As to quaternary structure, the mature envelope protein (Env) consists of a homotrimer of non-covalently associated gp120-gp41 heterodimers. The resulting complex protrudes from the virus surface as a spike. There seems to be as few as 10 spikes on the average virion. Interacts with host CD4, CCR5 and CXCR4. Gp120 also interacts with the C-type lectins CD209/DC-SIGN and CLEC4M/DC-SIGNR (collectively referred to as DC-SIGN(R)). Gp120 and gp41 interact with GalCer. Gp120 interacts with host ITGA4/ITGB7 complex; on CD4+ T-cells, this interaction results in rapid activation of integrin ITGAL/LFA-1, which facilitates efficient cell-to-cell spreading of HIV-1. Gp120 interacts with cell-associated heparan sulfate; this interaction increases virus infectivity on permissive cells and may be involved in infection of CD4- cells. The mature envelope protein (Env) consists of a homotrimer of non-covalently associated gp120-gp41 heterodimers. The resulting complex protrudes from the virus surface as a spike. There seems to be as few as 10 spikes on the average virion. Highly glycosylated by host. The high number of glycan on the protein is reffered to as 'glycan shield' because it contributes to hide protein sequence from adaptive immune system. Post-translationally, palmitoylation of the transmembrane protein and of Env polyprotein (prior to its proteolytic cleavage) is essential for their association with host cell membrane lipid rafts. Palmitoylation is therefore required for envelope trafficking to classical lipid rafts, but not for viral replication. In terms of processing, specific enzymatic cleavages in vivo yield mature proteins. Envelope glycoproteins are synthesized as an inactive precursor that is heavily N-glycosylated and processed likely by host cell furin in the Golgi to yield the mature SU and TM proteins. The cleavage site between SU and TM requires the minimal sequence [KR]-X-[KR]-R. About 2 of the 9 disulfide bonds of gp41 are reduced by P4HB/PDI, following binding to CD4 receptor.

Its subcellular location is the virion membrane. It localises to the host cell membrane. The protein resides in the host endosome membrane. In terms of biological role, oligomerizes in the host endoplasmic reticulum into predominantly trimers. In a second time, gp160 transits in the host Golgi, where glycosylation is completed. The precursor is then proteolytically cleaved in the trans-Golgi and thereby activated by cellular furin or furin-like proteases to produce gp120 and gp41. Attaches the virus to the host lymphoid cell by binding to the primary receptor CD4. This interaction induces a structural rearrangement creating a high affinity binding site for a chemokine coreceptor like CXCR4 and/or CCR5. Acts as a ligand for CD209/DC-SIGN and CLEC4M/DC-SIGNR, which are respectively found on dendritic cells (DCs), and on endothelial cells of liver sinusoids and lymph node sinuses. These interactions allow capture of viral particles at mucosal surfaces by these cells and subsequent transmission to permissive cells. HIV subverts the migration properties of dendritic cells to gain access to CD4+ T-cells in lymph nodes. Virus transmission to permissive T-cells occurs either in trans (without DCs infection, through viral capture and transmission), or in cis (following DCs productive infection, through the usual CD4-gp120 interaction), thereby inducing a robust infection. In trans infection, bound virions remain infectious over days and it is proposed that they are not degraded, but protected in non-lysosomal acidic organelles within the DCs close to the cell membrane thus contributing to the viral infectious potential during DCs' migration from the periphery to the lymphoid tissues. On arrival at lymphoid tissues, intact virions recycle back to DCs' cell surface allowing virus transmission to CD4+ T-cells. Its function is as follows. Acts as a class I viral fusion protein. Under the current model, the protein has at least 3 conformational states: pre-fusion native state, pre-hairpin intermediate state, and post-fusion hairpin state. During fusion of viral and target intracellular membranes, the coiled coil regions (heptad repeats) assume a trimer-of-hairpins structure, positioning the fusion peptide in close proximity to the C-terminal region of the ectodomain. The formation of this structure appears to drive apposition and subsequent fusion of viral and target cell membranes. Complete fusion occurs in host cell endosomes and is dynamin-dependent, however some lipid transfer might occur at the plasma membrane. The virus undergoes clathrin-dependent internalization long before endosomal fusion, thus minimizing the surface exposure of conserved viral epitopes during fusion and reducing the efficacy of inhibitors targeting these epitopes. Membranes fusion leads to delivery of the nucleocapsid into the cytoplasm. The polypeptide is Envelope glycoprotein gp160 (Homo sapiens (Human)).